We begin with the raw amino-acid sequence, 397 residues long: Elongation factor Tu (397 aa).

Positions 10 to 207 constitute a tr-type G domain; it reads KPHVNIGTIG…AVDTYIEEPK (198 aa). Residues 19–26 form a G1 region; it reads GHVDHGKT. Residue 19–26 coordinates GTP; the sequence is GHVDHGKT. Thr-26 is a Mg(2+) binding site. Positions 60 to 64 are G2; it reads GITIN. The interval 81–84 is G3; it reads DCPG. GTP contacts are provided by residues 81-85 and 136-139; these read DCPGH and NKID. The segment at 136 to 139 is G4; that stretch reads NKID. Positions 177–179 are G5; that stretch reads SAL.

The protein belongs to the TRAFAC class translation factor GTPase superfamily. Classic translation factor GTPase family. EF-Tu/EF-1A subfamily. As to quaternary structure, monomer.

The protein localises to the cytoplasm. The enzyme catalyses GTP + H2O = GDP + phosphate + H(+). GTP hydrolase that promotes the GTP-dependent binding of aminoacyl-tRNA to the A-site of ribosomes during protein biosynthesis. The sequence is that of Elongation factor Tu from Metamycoplasma hominis (strain ATCC 23114 / DSM 25592 / NBRC 14850 / NCTC 10111 / PG21) (Mycoplasma hominis).